The sequence spans 338 residues: DNA-directed RNA polymerase subunit alpha (338 aa).

Residues 1–234 are alpha N-terminal domain (alpha-NTD); sequence MIHKNWQELI…DQLSIFVNFD (234 aa). The segment at 250 to 338 is alpha C-terminal domain (alpha-CTD); sequence FNPLLLKKVD…ELAKKYEDNF (89 aa).

This sequence belongs to the RNA polymerase alpha chain family. Homodimer. The RNAP catalytic core consists of 2 alpha, 1 beta, 1 beta' and 1 omega subunit. When a sigma factor is associated with the core the holoenzyme is formed, which can initiate transcription.

The enzyme catalyses RNA(n) + a ribonucleoside 5'-triphosphate = RNA(n+1) + diphosphate. Functionally, DNA-dependent RNA polymerase catalyzes the transcription of DNA into RNA using the four ribonucleoside triphosphates as substrates. The polypeptide is DNA-directed RNA polymerase subunit alpha (Jannaschia sp. (strain CCS1)).